Here is a 295-residue protein sequence, read N- to C-terminus: tRNA-cytidine(32) 2-sulfurtransferase (295 aa).

The PP-loop motif signature appears at 63–68; the sequence is SGGKDS. Cysteine 138, cysteine 141, and cysteine 229 together coordinate [4Fe-4S] cluster.

Belongs to the TtcA family. As to quaternary structure, homodimer. The cofactor is Mg(2+). It depends on [4Fe-4S] cluster as a cofactor.

It is found in the cytoplasm. The catalysed reaction is cytidine(32) in tRNA + S-sulfanyl-L-cysteinyl-[cysteine desulfurase] + AH2 + ATP = 2-thiocytidine(32) in tRNA + L-cysteinyl-[cysteine desulfurase] + A + AMP + diphosphate + H(+). It functions in the pathway tRNA modification. Catalyzes the ATP-dependent 2-thiolation of cytidine in position 32 of tRNA, to form 2-thiocytidine (s(2)C32). The sulfur atoms are provided by the cysteine/cysteine desulfurase (IscS) system. This Hyphomonas neptunium (strain ATCC 15444) protein is tRNA-cytidine(32) 2-sulfurtransferase.